Consider the following 274-residue polypeptide: Bis(5'-nucleosyl)-tetraphosphatase, symmetrical (274 aa).

It belongs to the Ap4A hydrolase family.

The catalysed reaction is P(1),P(4)-bis(5'-adenosyl) tetraphosphate + H2O = 2 ADP + 2 H(+). Its function is as follows. Hydrolyzes diadenosine 5',5'''-P1,P4-tetraphosphate to yield ADP. The chain is Bis(5'-nucleosyl)-tetraphosphatase, symmetrical from Shewanella baltica (strain OS223).